The primary structure comprises 994 residues: cGMP-dependent protein kinase (994 aa).

Positions 1 to 162 (MGACISKNSS…QDDSHTEEEK (162 aa)) are disordered. Gly2 is lipidated: N-myristoyl glycine. Cys4 carries S-palmitoyl cysteine lipidation. Low complexity-rich tracts occupy residues 9–22 (SSAR…LSAS) and 33–46 (GAAG…GAAE). Basic and acidic residues-rich tracts occupy residues 65–80 (ELER…REEP) and 133–162 (EGPK…EEEK). 4 cNMP-binding domain regions span residues 189–305 (VCSS…FLAS), 308–407 (FFEM…RVLG), 463–539 (GIRF…ATLG), and 561–660 (IFRY…NEII). Residues Gly253, Glu254, Ala256, Arg263, and Ser264 each contribute to the 3',5'-cyclic GMP site. 3',5'-cyclic GMP-binding residues include Arg616, Gly625, Glu626, Ala628, Arg635, and Thr636. A Protein kinase domain is found at 684–941 (LQVVRVVGRG…YKDIKEHAFF (258 aa)). Residues 690–698 (VGRGTFGTV) and Lys713 each bind ATP. Asp807 serves as the catalytic Proton acceptor. Residues 942 to 994 (GDFDWDKLAGRGLPPPLAPKGETYAEDTEQSSFELDEDDTIVLEDEYDWDKDF) form the AGC-kinase C-terminal domain. Residues 954–976 (LPPPLAPKGETYAEDTEQSSFEL) form a disordered region. A compositionally biased stretch (acidic residues) spans 965–976 (YAEDTEQSSFEL).

This sequence belongs to the protein kinase superfamily. AGC Ser/Thr protein kinase family. cGMP subfamily. Requires Mg(2+) as cofactor.

The protein resides in the cytoplasm. It localises to the membrane. It is found in the cell membrane. It catalyses the reaction L-seryl-[protein] + ATP = O-phospho-L-seryl-[protein] + ADP + H(+). It carries out the reaction L-threonyl-[protein] + ATP = O-phospho-L-threonyl-[protein] + ADP + H(+). With respect to regulation, activated by cGMP. The cGMP-binding domains acts cooperatively to activate PKG. Inhibited by the antiparasitic small molecule 4-[2-(4-fluorophenyl)-5-(1-methylpiperidine-4-yl)-1Hpyrrol- 3-yl]pyridine (compound 1). Serine/threonine protein kinase which acts as a downstream effector of the second messenger cGMP. Plays an essential role in tachyzoite invasion of and egress from host cells. During invasion of host cells, regulates the apico-basal flux of F-actin probably via Ca(2+)-mediated activation of CDPK1. In tachyzoites, required for microneme secretion. Required for tachyzoite gliding motility. In terms of biological role, plays an essential role in parasite invasion of and egress from host cells, and microneme secretion. Its function is as follows. Dispensable for parasite invasion of and egress from host cells, and microneme secretion. This is cGMP-dependent protein kinase from Toxoplasma gondii.